A 301-amino-acid polypeptide reads, in one-letter code: Cilia- and flagella-associated protein 161 (301 aa).

The segment at 269-301 is disordered; it reads GNPRDASSSMLDLPKPPTEDTRAMEQAMGLDTQ.

In terms of assembly, microtubule inner protein component of sperm flagellar doublet microtubules. As to expression, expressed in airway epithelial cells.

The protein resides in the cytoplasm. It is found in the cytoskeleton. The protein localises to the cilium axoneme. It localises to the flagellum axoneme. Its function is as follows. Microtubule inner protein (MIP) part of the dynein-decorated doublet microtubules (DMTs) in cilia axoneme, which is required for motile cilia beating. The protein is Cilia- and flagella-associated protein 161 of Homo sapiens (Human).